Here is a 328-residue protein sequence, read N- to C-terminus: PDZ and LIM domain protein 1 (328 aa).

Thr2 carries the post-translational modification N-acetylthreonine. Positions 3 to 85 (TLQIVLQGPG…NMTLTVARSE (83 aa)) constitute a PDZ domain. Phosphoserine occurs at positions 90 and 130. Tyr144 carries the phosphotyrosine modification. An LIM zinc-binding domain is found at 257–316 (PMCDKCGTGIVGVFVKLRERHRHPECYVCTDCGTNLKQKGHFFVEDQIYCEKHARERVTP). Residues Cys259, Cys262, His279, Cys282, Cys285, Cys288, Cys306, and His309 each contribute to the Zn(2+) site. At Thr315 the chain carries Phosphothreonine. A Phosphotyrosine modification is found at Tyr320.

As to quaternary structure, interacts with ACTN1, ACTN2 and ACTN4. Interacts with PDLIM4.

Its subcellular location is the cytoplasm. The protein localises to the cytoskeleton. It localises to the myofibril. It is found in the sarcomere. The protein resides in the z line. In terms of biological role, cytoskeletal protein that may act as an adapter that brings other proteins (like kinases) to the cytoskeleton. Involved in assembly, disassembly and directioning of stress fibers in fibroblasts. Required for the localization of ACTN1 and PALLD to stress fibers. Required for cell migration and in maintaining cell polarity of fibroblasts. The polypeptide is PDZ and LIM domain protein 1 (PDLIM1) (Bos taurus (Bovine)).